The sequence spans 195 residues: Imidazoleglycerol-phosphate dehydratase (195 aa).

It belongs to the imidazoleglycerol-phosphate dehydratase family.

Its subcellular location is the cytoplasm. The enzyme catalyses D-erythro-1-(imidazol-4-yl)glycerol 3-phosphate = 3-(imidazol-4-yl)-2-oxopropyl phosphate + H2O. It participates in amino-acid biosynthesis; L-histidine biosynthesis; L-histidine from 5-phospho-alpha-D-ribose 1-diphosphate: step 6/9. This is Imidazoleglycerol-phosphate dehydratase from Cereibacter sphaeroides (strain ATCC 17023 / DSM 158 / JCM 6121 / CCUG 31486 / LMG 2827 / NBRC 12203 / NCIMB 8253 / ATH 2.4.1.) (Rhodobacter sphaeroides).